We begin with the raw amino-acid sequence, 466 residues long: cGMP-specific 3',5'-cGMP phosphodiesterase 3 (466 aa).

The span at 1 to 120 (MAPQQNIMKQ…NSNNNNSNNN (120 aa)) shows a compositional bias: low complexity. The segment at 1-150 (MAPQQNIMKQ…NNNKIRGYND (150 aa)) is disordered. A compositionally biased stretch (acidic residues) spans 123–134 (DDEEEEGDDEDN). Positions 135-150 (NNNNNSNNNKIRGYND) are enriched in low complexity. Positions 137 to 458 (NNNSNNNKIR…EIWSNNGSSS (322 aa)) constitute a PDEase domain. Histidine 213 serves as the catalytic Proton donor. Residues histidine 217, histidine 253, aspartate 254, and aspartate 364 each contribute to the a divalent metal cation site.

The protein belongs to the cyclic nucleotide phosphodiesterase family. It depends on a divalent metal cation as a cofactor.

It localises to the cytoplasm. Its subcellular location is the cytosol. The catalysed reaction is 3',5'-cyclic GMP + H2O = GMP + H(+). Inhibited by 3-isobutyl-1-methylxanthine (IBMX). Its function is as follows. Phosphodiesterase specific for cGMP, which is not activated by cGMP. Involved in the degradation of intracellular cGMP. The protein is cGMP-specific 3',5'-cGMP phosphodiesterase 3 (pde3) of Dictyostelium discoideum (Social amoeba).